Consider the following 134-residue polypeptide: Iron-sulfur cluster insertion protein ErpA (134 aa).

Residues Cys-47, Cys-126, and Cys-128 each contribute to the iron-sulfur cluster site.

It belongs to the HesB/IscA family. In terms of assembly, homodimer. It depends on iron-sulfur cluster as a cofactor.

Functionally, required for insertion of 4Fe-4S clusters for at least IspG. This Coxiella burnetii (strain Dugway 5J108-111) protein is Iron-sulfur cluster insertion protein ErpA.